A 446-amino-acid polypeptide reads, in one-letter code: Methionine aminopeptidase 2-1 (446 aa).

The segment at 1–88 is disordered; sequence MAAQVTPELA…PPRVILSSIF (88 aa). The segment covering 32-44 has biased composition (acidic residues); that stretch reads ENEDVESDDDNEG. The segment covering 57-72 has biased composition (basic residues); the sequence is AKKKKKKKPKKKKKGG. His196 contributes to the substrate binding site. A divalent metal cation-binding residues include Asp216, Asp227, and His296. Residue His304 coordinates substrate. A divalent metal cation is bound by residues Glu332 and Glu427.

The protein belongs to the peptidase M24A family. Methionine aminopeptidase eukaryotic type 2 subfamily. It depends on Co(2+) as a cofactor. Zn(2+) is required as a cofactor. Mn(2+) serves as cofactor. Requires Fe(2+) as cofactor.

It localises to the cytoplasm. The enzyme catalyses Release of N-terminal amino acids, preferentially methionine, from peptides and arylamides.. Its function is as follows. Cotranslationally removes the N-terminal methionine from nascent proteins. The N-terminal methionine is often cleaved when the second residue in the primary sequence is small and uncharged (Met-Ala-, Cys, Gly, Pro, Ser, Thr, or Val). The polypeptide is Methionine aminopeptidase 2-1 (Blastomyces gilchristii (strain SLH14081) (Blastomyces dermatitidis)).